We begin with the raw amino-acid sequence, 425 residues long: MTHLLLLLFFSCVQLTTGQFYCADLIQQCAKSAAEYTEQILQYKESAFKSCVRRPACHTERKIFDECFDASVSATHISPPQESTSNDGETRKVTQPPMVKYNSLLKFFTEKSMNFRSALDQCFVRSPFVPKRNFFGPSILDEDAAYARAIYQFDLADRLWGLPELSVTRPSLDTLGVCRTQNTALRVFGSGISRIARASDPKKNNLTSSCMLDEDEITCYRQALDLNSEYIQLIYNRDYALRACIQNLRQQSVCRMNDKSRLRSCLCGVREQYDNDVQAGILQCVKSKSPHIPAMVIEMSSSLDEEPTSAKIQEQVTPAQLTFDTPGAIVNGQCMCACEHSAKNEATRLFANKKNNNDVEKSTQIEKKPEKQGPEIQEEVVEMETVKDEQPPKTSAVRFKENSPRLMQPSEAAGRVFWMNNITIT.

Residues 355–373 (NNNDVEKSTQIEKKPEKQG) show a composition bias toward basic and acidic residues. Positions 355-407 (NNNDVEKSTQIEKKPEKQGPEIQEEVVEMETVKDEQPPKTSAVRFKENSPRLM) are disordered.

The polypeptide is Protein upregulated in glial subsets pugs-5 (Caenorhabditis elegans).